The primary structure comprises 577 residues: Hemagglutinin-neuraminidase (577 aa).

Residues 1–26 are Intravirion-facing; it reads MDRAVSQVALENDEREAKNTWRLIFR. Residues 27 to 47 traverse the membrane as a helical segment; the sequence is IAILLLTVVTLATSVASLVYS. At 48–577 the chain is on the virion surface side; it reads MGASTPSDLV…NDGVREARSG (530 aa). A glycan (N-linked (GlcNAc...) asparagine; by host) is linked at Asn-119. Residues 124–152 are important for interaction with fusion/F protein; the sequence is GAPIHDPDFIGGIGKELIVDDASDVTSFY. Disulfide bonds link Cys-172–Cys-196, Cys-186–Cys-247, and Cys-238–Cys-251. The tract at residues 234 to 239 is involved in neuraminidase activity; the sequence is NRKSCS. 2 N-linked (GlcNAc...) asparagine; by host glycosylation sites follow: Asn-341 and Asn-433. 2 disulfides stabilise this stretch: Cys-344–Cys-461 and Cys-455–Cys-465. N-linked (GlcNAc...) asparagine; by host glycosylation is found at Asn-481 and Asn-538. The cysteines at positions 531 and 542 are disulfide-linked.

The protein belongs to the paramyxoviruses hemagglutinin-neuraminidase family. In terms of assembly, homotetramer; composed of disulfide-linked homodimers. Interacts with F protein trimer. Interacts with host CG-1B; this interaction inhibits viral adsorption and replication rather than internalization.

It is found in the virion membrane. The protein localises to the host cell membrane. The enzyme catalyses Hydrolysis of alpha-(2-&gt;3)-, alpha-(2-&gt;6)-, alpha-(2-&gt;8)- glycosidic linkages of terminal sialic acid residues in oligosaccharides, glycoproteins, glycolipids, colominic acid and synthetic substrates.. Its function is as follows. Mediates the viral entry into the host cell together with fusion/F protein. Attaches the virus to sialic acid-containing cell receptors and thereby initiates infection. Binding of HN protein to the receptor induces a conformational change that allows the F protein to trigger virion/cell membranes fusion. In terms of biological role, neuraminidase activity ensures the efficient spread of the virus by dissociating the mature virions from the neuraminic acid containing glycoproteins. This chain is Hemagglutinin-neuraminidase (HN), found in Gallus gallus (Chicken).